A 227-amino-acid polypeptide reads, in one-letter code: UPF0758 protein lpp2553 (227 aa).

An MPN domain is found at 102–225 (RLSNTQQTYA…YSIFAENKWV (124 aa)). Zn(2+) is bound by residues histidine 173, histidine 175, and aspartate 186. The short motif at 173-186 (HNHPSGLSDASQQD) is the JAMM motif element.

The protein belongs to the UPF0758 family.

The sequence is that of UPF0758 protein lpp2553 from Legionella pneumophila (strain Paris).